Here is a 90-residue protein sequence, read N- to C-terminus: Large ribosomal subunit protein bL27 (90 aa).

Positions 1–21 are disordered; it reads MASKKAGGSTRNGRDSEAKRL.

Belongs to the bacterial ribosomal protein bL27 family.

The protein is Large ribosomal subunit protein bL27 of Neisseria meningitidis serogroup C (strain 053442).